The chain runs to 67 residues: Large ribosomal subunit protein bL35 (67 aa).

The protein belongs to the bacterial ribosomal protein bL35 family.

In Allorhizobium ampelinum (strain ATCC BAA-846 / DSM 112012 / S4) (Agrobacterium vitis (strain S4)), this protein is Large ribosomal subunit protein bL35.